The primary structure comprises 193 residues: Ion-translocating oxidoreductase complex subunit B (193 aa).

A hydrophobic region spans residues 1–26 (MSTMLIAVILLTLLALFFGVLLGFAA). In terms of domain architecture, 4Fe-4S spans 32 to 90 (EGNPIVDELEAILPQTQCGQCGYPGCRPYAEAIANGDKVNKCPPGGTATMEKLASLMGV). [4Fe-4S] cluster is bound by residues Cys49, Cys52, Cys57, Cys73, Cys114, Cys117, Cys120, Cys124, Cys144, Cys147, Cys150, and Cys154. 4Fe-4S ferredoxin-type domains follow at residues 105-134 (KVAY…GAGK) and 136-164 (MHTV…MLPV).

The protein belongs to the 4Fe4S bacterial-type ferredoxin family. RnfB subfamily. As to quaternary structure, the complex is composed of six subunits: RnfA, RnfB, RnfC, RnfD, RnfE and RnfG. [4Fe-4S] cluster serves as cofactor.

It localises to the cell inner membrane. Functionally, part of a membrane-bound complex that couples electron transfer with translocation of ions across the membrane. This is Ion-translocating oxidoreductase complex subunit B from Shewanella sp. (strain MR-4).